A 242-amino-acid polypeptide reads, in one-letter code: Small ribosomal subunit protein uS2 (242 aa).

Belongs to the universal ribosomal protein uS2 family.

The protein is Small ribosomal subunit protein uS2 of Vibrio campbellii (strain ATCC BAA-1116).